We begin with the raw amino-acid sequence, 174 residues long: Crossover junction endodeoxyribonuclease RuvC (174 aa).

Residues D16, E76, and D148 contribute to the active site. The Mg(2+) site is built by D16, E76, and D148.

This sequence belongs to the RuvC family. Homodimer which binds Holliday junction (HJ) DNA. The HJ becomes 2-fold symmetrical on binding to RuvC with unstacked arms; it has a different conformation from HJ DNA in complex with RuvA. In the full resolvosome a probable DNA-RuvA(4)-RuvB(12)-RuvC(2) complex forms which resolves the HJ. Mg(2+) is required as a cofactor.

Its subcellular location is the cytoplasm. It carries out the reaction Endonucleolytic cleavage at a junction such as a reciprocal single-stranded crossover between two homologous DNA duplexes (Holliday junction).. Functionally, the RuvA-RuvB-RuvC complex processes Holliday junction (HJ) DNA during genetic recombination and DNA repair. Endonuclease that resolves HJ intermediates. Cleaves cruciform DNA by making single-stranded nicks across the HJ at symmetrical positions within the homologous arms, yielding a 5'-phosphate and a 3'-hydroxyl group; requires a central core of homology in the junction. The consensus cleavage sequence is 5'-(A/T)TT(C/G)-3'. Cleavage occurs on the 3'-side of the TT dinucleotide at the point of strand exchange. HJ branch migration catalyzed by RuvA-RuvB allows RuvC to scan DNA until it finds its consensus sequence, where it cleaves and resolves the cruciform DNA. In Rhodopseudomonas palustris (strain BisA53), this protein is Crossover junction endodeoxyribonuclease RuvC.